The following is a 243-amino-acid chain: 3-deoxy-manno-octulosonate cytidylyltransferase (243 aa).

It belongs to the KdsB family.

The protein resides in the cytoplasm. The catalysed reaction is 3-deoxy-alpha-D-manno-oct-2-ulosonate + CTP = CMP-3-deoxy-beta-D-manno-octulosonate + diphosphate. It participates in nucleotide-sugar biosynthesis; CMP-3-deoxy-D-manno-octulosonate biosynthesis; CMP-3-deoxy-D-manno-octulosonate from 3-deoxy-D-manno-octulosonate and CTP: step 1/1. It functions in the pathway bacterial outer membrane biogenesis; lipopolysaccharide biosynthesis. Functionally, activates KDO (a required 8-carbon sugar) for incorporation into bacterial lipopolysaccharide in Gram-negative bacteria. The protein is 3-deoxy-manno-octulosonate cytidylyltransferase of Bartonella henselae (strain ATCC 49882 / DSM 28221 / CCUG 30454 / Houston 1) (Rochalimaea henselae).